We begin with the raw amino-acid sequence, 384 residues long: Tryptophan--tRNA ligase (384 aa).

A 'HIGH' region motif is present at residues 81–89; the sequence is PSGPMHIGH. The 'KMSKS' region signature appears at 252–256; that stretch reads KMSAS.

It belongs to the class-I aminoacyl-tRNA synthetase family.

The protein resides in the cytoplasm. The enzyme catalyses tRNA(Trp) + L-tryptophan + ATP = L-tryptophyl-tRNA(Trp) + AMP + diphosphate + H(+). This Thermococcus onnurineus (strain NA1) protein is Tryptophan--tRNA ligase.